Here is a 156-residue protein sequence, read N- to C-terminus: Protein BUNDLE SHEATH DEFECTIVE 2, chloroplastic (156 aa).

A chloroplast-targeting transit peptide spans 1 to 41 (MNSAALNARTASVAPQPQACHACKCRQLLSRRVPPAQRQVE). Cysteine 78, cysteine 81, cysteine 89, cysteine 92, cysteine 133, cysteine 136, cysteine 144, and cysteine 147 together coordinate Zn(2+).

The protein belongs to the BSD2 chaperone family. In terms of assembly, interacts with the RuBisCo large subunit (RbcL) assembled as an intermediate complex made of eight RbcL and eight BSD2 subunits.

Its subcellular location is the plastid. It localises to the chloroplast stroma. Functionally, chloroplast chaperone required for RuBisCo biogenesis and translational regulation of the RuBisCo large subunit (RbcL). Stabilizes an end-state assembly intermediate of eight RbcL subunits until the small subunits (RBCSs) become available to produce a complete stable RuBisCo complex containing eight small and eight large subunits. The sequence is that of Protein BUNDLE SHEATH DEFECTIVE 2, chloroplastic from Chlamydomonas reinhardtii (Chlamydomonas smithii).